A 378-amino-acid polypeptide reads, in one-letter code: RNA polymerase sigma factor SigA (378 aa).

The tract at residues 1–29 (MKNKTEVKNGGEKKNSKKVSKEESAKEKN) is disordered. The interval 145-215 (LAEANLRLVV…TRAIADQART (71 aa)) is sigma-70 factor domain-2. The Interaction with polymerase core subunit RpoC signature appears at 169-172 (DLIQ). Positions 224 to 300 (ETINKLIRVS…DDEAPAPADA (77 aa)) are sigma-70 factor domain-3. The interval 313–366 (ILNTLTPREEKVLRLRFGLDDGRARTLEEVGKEFNVTRERIRQIEAKALRKLRH) is sigma-70 factor domain-4. The H-T-H motif DNA-binding region spans 339–358 (LEEVGKEFNVTRERIRQIEA).

It belongs to the sigma-70 factor family. RpoD/SigA subfamily. As to quaternary structure, interacts transiently with the RNA polymerase catalytic core.

The protein localises to the cytoplasm. In terms of biological role, sigma factors are initiation factors that promote the attachment of RNA polymerase to specific initiation sites and are then released. This sigma factor is the primary sigma factor during exponential growth. The polypeptide is RNA polymerase sigma factor SigA (Clostridium acetobutylicum (strain ATCC 824 / DSM 792 / JCM 1419 / IAM 19013 / LMG 5710 / NBRC 13948 / NRRL B-527 / VKM B-1787 / 2291 / W)).